The following is a 157-amino-acid chain: NudC domain-containing protein 2 (157 aa).

Position 2 is an N-acetylserine (serine 2). Residues 14–104 form the CS domain; the sequence is CATPWGQWYQ…DAANCWTSLL (91 aa). The segment at 134-157 is disordered; it reads FDFSGAEISGNYTKGGPDFSNLEK. Residue serine 142 is modified to Phosphoserine. A Phosphotyrosine modification is found at tyrosine 145.

In terms of assembly, interacts with LIS1.

The protein localises to the chromosome. The protein resides in the centromere. It localises to the kinetochore. It is found in the cytoplasm. Its subcellular location is the cytoskeleton. The protein localises to the microtubule organizing center. The protein resides in the centrosome. It localises to the spindle pole. In terms of biological role, may regulate the LIS1/dynein pathway by stabilizing LIS1 with Hsp90 chaperone. The chain is NudC domain-containing protein 2 (Nudcd2) from Rattus norvegicus (Rat).